Here is a 150-residue protein sequence, read N- to C-terminus: Arginine repressor (150 aa).

It belongs to the ArgR family.

The protein localises to the cytoplasm. Its pathway is amino-acid biosynthesis; L-arginine biosynthesis [regulation]. Its function is as follows. Regulates arginine biosynthesis genes. The protein is Arginine repressor of Staphylococcus aureus (strain Mu3 / ATCC 700698).